A 179-amino-acid chain; its full sequence is MGILFTRIWRLFNHQEHKVIIVGLDNAGKTTILYQFSMNEVVHTSPTIGSNVEEIVINNTRFLMWDIGGQESLRSSWNTYYTNTEFVIVVVDSTDRERISVTREELYKMLAHEDLRKAGLLIFANKQDVKECMTVAEISQFLKLTSIKDHQWHIQACCALTGEGLCQGLEWMMSRLKIR.

Gly-2 carries N-myristoyl glycine lipidation. Residues 23–30, 66–70, 125–128, and Ala-159 contribute to the GTP site; these read GLDNAGKT, DIGGQ, and NKQD.

Belongs to the small GTPase superfamily. Arf family.

Its function is as follows. Lacks ADP-ribosylation enhancing activity. The protein is ADP-ribosylation factor-like protein 5A (ARL5A) of Homo sapiens (Human).